A 140-amino-acid polypeptide reads, in one-letter code: Small ribosomal subunit protein uS12 (140 aa).

2 disordered regions span residues 36 to 56 (TYNP…MTPK) and 117 to 140 (TSGV…EKKE).

The protein belongs to the universal ribosomal protein uS12 family. As to quaternary structure, part of the 30S ribosomal subunit. Contacts proteins S8 and S17. May interact with IF1 in the 30S initiation complex.

Its function is as follows. With S4 and S5 plays an important role in translational accuracy. In terms of biological role, interacts with and stabilizes bases of the 16S rRNA that are involved in tRNA selection in the A site and with the mRNA backbone. Located at the interface of the 30S and 50S subunits, it traverses the body of the 30S subunit contacting proteins on the other side and probably holding the rRNA structure together. The combined cluster of proteins S8, S12 and S17 appears to hold together the shoulder and platform of the 30S subunit. The sequence is that of Small ribosomal subunit protein uS12 from Malacoplasma penetrans (strain HF-2) (Mycoplasma penetrans).